The sequence spans 627 residues: MSLDISKYPILALANTPDELRSLPKESLPALCDELRTYLLNSVSKTSGHLASGLGVVELTVALHYVYNTPFDQLIWDVGHQAYPHKILTGRREQLSTIRQKDGLHPFPWRGESEYDVLSVGHSSTSISAALGLAICAEKEQENRKIVSVIGDGAITAGMAFEALNHAGDIHPDMLVVLNDNEMSISENVGALNNQLARVLSGSLYTSIREGGKKVLSGTPTIKELLKRTEEHLKGMVVPGTMFEELGFNYIGPVDGHDVNELVRTLKNMRNLKGPQFLHIMTKKGKGYEPAEKDPISYHGVPKFDPSNTSLPKSSGGKPTFSAVFGDFLCDMAKEDSKLMAITPAMREGSGMVRFSKEYPNQYFDAAIAEQHAVTLASGMAIAGYNPIVAIYSTFLQRGYDQLIHDVAIMDLPVMFAIDRAGLVGADGQTHQGAFDISFMRCIPNMVIMTPSDENECRQMLYTGHKHTGPSAVRYPRGSATGIQVNNEMQALEIGKGRLLRETKVTDKGERVAILNFGTFLANSLEAAEKLDATVADMRFAKPLDEALICELVTNHDVLVTIEENAISGGAGSGVIEFLMKNRLVKPVLQLGLPDEFIAQGTQEEMHIELKLDSNGIEQQIRDYLDL.

Thiamine diphosphate is bound by residues His80 and Gly121–Ser123. Asp152 is a binding site for Mg(2+). Thiamine diphosphate is bound by residues Gly153–Ala154, Asn181, Tyr288, and Glu370. Position 181 (Asn181) interacts with Mg(2+).

It belongs to the transketolase family. DXPS subfamily. As to quaternary structure, homodimer. Mg(2+) is required as a cofactor. Requires thiamine diphosphate as cofactor.

It carries out the reaction D-glyceraldehyde 3-phosphate + pyruvate + H(+) = 1-deoxy-D-xylulose 5-phosphate + CO2. The protein operates within metabolic intermediate biosynthesis; 1-deoxy-D-xylulose 5-phosphate biosynthesis; 1-deoxy-D-xylulose 5-phosphate from D-glyceraldehyde 3-phosphate and pyruvate: step 1/1. Functionally, catalyzes the acyloin condensation reaction between C atoms 2 and 3 of pyruvate and glyceraldehyde 3-phosphate to yield 1-deoxy-D-xylulose-5-phosphate (DXP). The sequence is that of 1-deoxy-D-xylulose-5-phosphate synthase from Aliivibrio fischeri (strain MJ11) (Vibrio fischeri).